The primary structure comprises 197 residues: uncharacterized protein (197 aa).

This sequence belongs to the NAD(P)H dehydrogenase (quinone) family.

This is an uncharacterized protein from Bacillus subtilis (strain 168).